A 338-amino-acid chain; its full sequence is Phytanoyl-CoA dioxygenase, peroxisomal (338 aa).

The transit peptide at 1 to 30 (MDYTRAGARLQVLLGHLGRPSALQIVAHPV) directs the protein to the peroxisome. 2 positions are modified to N6-succinyllysine: lysine 59 and lysine 108. 2-oxoglutarate is bound by residues lysine 120, methionine 157, 175-177 (HQD), and tryptophan 193. 2 residues coordinate Fe cation: histidine 175 and aspartate 177. Residues lysine 231 and lysine 252 each carry the N6-succinyllysine modification. Histidine 264 is a binding site for Fe cation. Residues serine 266 and arginine 275 each contribute to the 2-oxoglutarate site.

The protein belongs to the PhyH family. In terms of assembly, interacts specifically with FKBP52 and PHYHIP. Requires Fe cation as cofactor. L-ascorbate is required as a cofactor. It depends on ATP as a cofactor. The cofactor is Mg(2+).

The protein resides in the peroxisome. It carries out the reaction phytanoyl-CoA + 2-oxoglutarate + O2 = 2-hydroxyphytanoyl-CoA + succinate + CO2. The enzyme catalyses 3-methylhexadecanoyl-CoA + 2-oxoglutarate + O2 = 2-hydroxy-3-methylhexadecanoyl-CoA + succinate + CO2. It catalyses the reaction hexadecanoyl-CoA + 2-oxoglutarate + O2 = 2-hydroxyhexadecanoyl-CoA + succinate + CO2. The catalysed reaction is octanoyl-CoA + 2-oxoglutarate + O2 = 2-hydroxyoctanoyl-CoA + succinate + CO2. It carries out the reaction decanoyl-CoA + 2-oxoglutarate + O2 = 2-hydroxydecanoyl-CoA + succinate + CO2. The enzyme catalyses 3-methylbutanoyl-CoA + 2-oxoglutarate + O2 = 2-hydroxy-3-methylbutanoyl-CoA + succinate + CO2. It catalyses the reaction heptadecanoyl-CoA + 2-oxoglutarate + O2 = 2-hydroxyheptadecanoyl-CoA + succinate + CO2. The catalysed reaction is eicosanoyl-CoA + 2-oxoglutarate + O2 = 2-hydroxyeicosanoyl-CoA + succinate + CO2. It carries out the reaction octadecanoyl-CoA + 2-oxoglutarate + O2 = 2-hydroxyoctadecanoyl-CoA + succinate + CO2. The enzyme catalyses dodecanoyl-CoA + 2-oxoglutarate + O2 = 2-hydroxydodecanoyl-CoA + succinate + CO2. It catalyses the reaction tetradecanoyl-CoA + 2-oxoglutarate + O2 = 2-hydroxytetradecanoyl-CoA + succinate + CO2. The catalysed reaction is hexanoyl-CoA + 2-oxoglutarate + O2 = 2-hydroxyhexanoyl-CoA + succinate + CO2. It carries out the reaction butanoyl-CoA + 2-oxoglutarate + O2 = 2-hydroxybutanoyl-CoA + succinate + CO2. The enzyme catalyses 3-methylnonanoyl-CoA + 2-oxoglutarate + O2 = 2-hydroxy-3-methylnonanoyl-CoA + succinate + CO2. It catalyses the reaction 3-methylundecanoyl-CoA + 2-oxoglutarate + O2 = 2-hydroxy-3-methylundecanoyl-CoA + succinate + CO2. The catalysed reaction is 3-methyldodecanoyl-CoA + 2-oxoglutarate + O2 = 2-hydroxy-3-methyldodecanoyl-CoA + succinate + CO2. The protein operates within lipid metabolism; fatty acid metabolism. Its function is as follows. Catalyzes the 2-hydroxylation of racemic phytanoyl-CoA and the isomers of 3-methylhexadecanoyl-CoA. Shows activity also towards a variety of other mono-branched 3-methylacyl-CoA esters (with a chain length of at least seven carbon atoms) and straight-chain acyl-CoA esters (with a chain length longer than four carbon atoms). Does not hydroxylate long and very long straight chain acyl-CoAs or 2-methyl-and 4-methyl-branched acyl-CoAs. The sequence is that of Phytanoyl-CoA dioxygenase, peroxisomal (Phyh) from Rattus norvegicus (Rat).